A 224-amino-acid chain; its full sequence is Urease accessory protein UreF (224 aa).

It belongs to the UreF family. As to quaternary structure, ureD, UreF and UreG form a complex that acts as a GTP-hydrolysis-dependent molecular chaperone, activating the urease apoprotein by helping to assemble the nickel containing metallocenter of UreC. The UreE protein probably delivers the nickel.

Its subcellular location is the cytoplasm. Required for maturation of urease via the functional incorporation of the urease nickel metallocenter. This Pseudomonas fluorescens (strain ATCC BAA-477 / NRRL B-23932 / Pf-5) protein is Urease accessory protein UreF.